A 1012-amino-acid polypeptide reads, in one-letter code: RNA-binding protein 26 (1012 aa).

Residue K94 forms a Glycyl lysine isopeptide (Lys-Gly) (interchain with G-Cter in SUMO2) linkage. Positions 98–127 form a coiled coil; that stretch reads LQHQEKDIKKEELTKEEEREKKFSRRLNHS. Residue K106 forms a Glycyl lysine isopeptide (Lys-Gly) (interchain with G-Cter in SUMO1); alternate linkage. Residue K106 forms a Glycyl lysine isopeptide (Lys-Gly) (interchain with G-Cter in SUMO2); alternate linkage. Residues 106–118 show a composition bias toward basic and acidic residues; the sequence is KKEELTKEEEREK. A disordered region spans residues 106 to 236; sequence KKEELTKEEE…PLENNYTPVS (131 aa). Residue S127 is modified to Phosphoserine. Over residues 134–168 the composition is skewed to basic and acidic residues; the sequence is RYRDNRSRDERKKDDRSRKRDYDRNPPRRDSYRDR. Basic residues predominate over residues 169-186; sequence YNRRRGRSRSYSRSRSRS. Composition is skewed to basic and acidic residues over residues 187–201 and 209–227; these read WSKERLRDRDRDRSR and RSRERDLVKPKYDLDRTDP. The segment at 288-316 adopts a C3H1-type zinc-finger fold; it reads PMPKKRCRDYDEKGFCMRGDMCPFDHGSD. The span at 334 to 388 shows a compositional bias: pro residues; sequence QPPVVEGPPPPGLPPPPPILTPPPVNLRPPVPPPGPLPPSLPPVTGPPPPLPPLQ. 2 disordered regions span residues 334 to 404 and 465 to 520; these read QPPV…SSVP and IGLT…NFNR. The span at 394–404 shows a compositional bias: low complexity; that stretch reads APPNSATSSVP. S501 bears the Phosphoserine mark. K515 is modified (N6-acetyllysine). S523 carries the post-translational modification Phosphoserine. The RRM 1 domain occupies 537–611; the sequence is TKLELRKVPP…RFIKVYWHRE (75 aa). Position 621 is a phosphoserine (S621). Residues 647–667 form a disordered region; the sequence is PVPSATTEPAEAQSATSELPQ. Coiled coils occupy residues 724 to 800 and 828 to 852; these read DNNE…KSTS and KKMQAGEEVTELRRKYTELQLEAAK. The segment at 858-889 is disordered; that stretch reads SGRGRGIHTRGRGTAHGRGRGRGRGRGVPGHA. Over residues 862–882 the composition is skewed to basic residues; that stretch reads RGIHTRGRGTAHGRGRGRGRG. The RRM 2 domain occupies 896–965; that stretch reads RALEISAFTE…QDLKLAWNKP (70 aa). A disordered region spans residues 970–1012; that stretch reads SAVDTEEAEPDEEEFQEESLVDDSLLQDDDEEEEDNESRSWRR. Residues 973 to 1005 show a composition bias toward acidic residues; it reads DTEEAEPDEEEFQEESLVDDSLLQDDDEEEEDN.

Expressed in testis and ovary.

Its function is as follows. May be involved in the turnover of nuclear polyadenylated (pA+) RNA. The sequence is that of RNA-binding protein 26 from Mus musculus (Mouse).